The following is an 812-amino-acid chain: Endogenous retrovirus group K member 18 Pol protein (812 aa).

Positions 57–245 constitute a Reverse transcriptase domain; it reads LEKGHIEPSF…TPFHYLGMQI (189 aa). Positions 161–164 match the LPQG motif; sequence LPQG. A YXDD motif is present at residues 195 to 198; that stretch reads YFDD. Residues 460-590 form the RNase H type-1 domain; it reads LENALTVFTD…ADLLVSSAFI (131 aa). Mg(2+) contacts are provided by Asp469, Glu497, Asp517, and Asp582. The Integrase-type zinc-finger motif lies at 587–628; the sequence is SAFIKAQELHALTHVNAAGLKNKFDVTWKQAKDIVQHCTQCQ. Residues His596, His600, Cys624, and Cys627 each coordinate Zn(2+). The Integrase catalytic domain occupies 637–803; that stretch reads AGVNPEVCVL…TSAEHLTGKK (167 aa).

It belongs to the beta type-B retroviral polymerase family. HERV class-II K(HML-2) pol subfamily.

The catalysed reaction is DNA(n) + a 2'-deoxyribonucleoside 5'-triphosphate = DNA(n+1) + diphosphate. It catalyses the reaction Endonucleolytic cleavage to 5'-phosphomonoester.. Its function is as follows. Early post-infection, the reverse transcriptase converts the viral RNA genome into double-stranded viral DNA. The RNase H domain of the reverse transcriptase performs two functions. It degrades the RNA template and specifically removes the RNA primer from the RNA/DNA hybrid. Following nuclear import, the integrase catalyzes the insertion of the linear, double-stranded viral DNA into the host cell chromosome. Endogenous Pol proteins may have kept, lost or modified their original function during evolution. The polypeptide is Endogenous retrovirus group K member 18 Pol protein (ERVK-18) (Homo sapiens (Human)).